Reading from the N-terminus, the 539-residue chain is Phosphoenolpyruvate carboxykinase (ATP) (539 aa).

Substrate is bound by residues Arg-64, Tyr-206, and Lys-212. ATP-binding positions include Lys-212, His-231, and 247–255; that span reads GLSGTGKTT. Mn(2+) contacts are provided by Lys-212 and His-231. Asp-268 serves as a coordination point for Mn(2+). ATP-binding positions include Glu-296, Arg-332, 448 to 449, and Thr-454; that span reads RI. A substrate-binding site is contributed by Arg-332.

The protein belongs to the phosphoenolpyruvate carboxykinase (ATP) family. Monomer. It depends on Mn(2+) as a cofactor.

Its subcellular location is the cytoplasm. It catalyses the reaction oxaloacetate + ATP = phosphoenolpyruvate + ADP + CO2. It functions in the pathway carbohydrate biosynthesis; gluconeogenesis. Its function is as follows. Involved in the gluconeogenesis. Catalyzes the conversion of oxaloacetate (OAA) to phosphoenolpyruvate (PEP) through direct phosphoryl transfer between the nucleoside triphosphate and OAA. This Yersinia enterocolitica serotype O:8 / biotype 1B (strain NCTC 13174 / 8081) protein is Phosphoenolpyruvate carboxykinase (ATP).